A 485-amino-acid polypeptide reads, in one-letter code: Cysteine--tRNA ligase (485 aa).

Cys-29 is a binding site for Zn(2+). The 'HIGH' region motif lies at 31 to 41 (ATVQGMPHVGH). The segment at 174-198 (QRVEDMQDAPDADPRGKRDPHDFAL) is disordered. A compositionally biased stretch (basic and acidic residues) spans 185 to 197 (ADPRGKRDPHDFA). Positions 227, 252, and 256 each coordinate Zn(2+). The 'KMSKS' region signature appears at 283–287 (KMSKS). Lys-286 lines the ATP pocket.

Belongs to the class-I aminoacyl-tRNA synthetase family. In terms of assembly, monomer. Zn(2+) serves as cofactor.

It is found in the cytoplasm. The enzyme catalyses tRNA(Cys) + L-cysteine + ATP = L-cysteinyl-tRNA(Cys) + AMP + diphosphate. In Micrococcus luteus (strain ATCC 4698 / DSM 20030 / JCM 1464 / CCM 169 / CCUG 5858 / IAM 1056 / NBRC 3333 / NCIMB 9278 / NCTC 2665 / VKM Ac-2230) (Micrococcus lysodeikticus), this protein is Cysteine--tRNA ligase.